Reading from the N-terminus, the 399-residue chain is Mannan endo-1,4-beta-mannosidase 4 (399 aa).

A signal peptide spans 1-26 (MNNSIILIFVAILIIFPNEFSKPTRA). Residues W88 and N203 each coordinate substrate. Catalysis depends on E204, which acts as the Proton donor. Y279 provides a ligand contact to substrate. Residue E318 is the Nucleophile of the active site. C347 and C354 are joined by a disulfide. W360 lines the substrate pocket.

This sequence belongs to the glycosyl hydrolase 5 (cellulase A) family. Expressed in flowers and fruit pericarp.

The protein resides in the secreted. It catalyses the reaction Random hydrolysis of (1-&gt;4)-beta-D-mannosidic linkages in mannans, galactomannans and glucomannans.. In terms of biological role, possesses endo-beta-mannanase and mannan transglycosylase activities. May be involved in cell wall degradation during fruit ripening. The chain is Mannan endo-1,4-beta-mannosidase 4 (MAN4) from Solanum lycopersicum (Tomato).